A 427-amino-acid chain; its full sequence is TNF receptor-associated factor family protein DDB_G0285149 (427 aa).

The RING-type zinc-finger motif lies at 20–65; the sequence is CIVCTDLLSESHDKIQVNQCPHGHCLCSDCWTKQIENKKKECPICR. 2 TRAF-type zinc fingers span residues 122–178 and 178–234; these read THFK…INKD and DHLE…KHQA. The MATH domain occupies 284-415; that stretch reads KYSNQWVIEN…GNKLTIKFEI (132 aa).

It belongs to the TNF receptor-associated factor family. A subfamily.

It localises to the cytoplasm. In terms of biological role, probable adapter protein and signal transducer that links members of the tumor necrosis factor receptor family to different signaling pathways by association with the receptor cytoplasmic domain and kinases. In Dictyostelium discoideum (Social amoeba), this protein is TNF receptor-associated factor family protein DDB_G0285149.